A 118-amino-acid chain; its full sequence is MSEVQDYKSRLSDPASAKFETLSYLPALTADEIRQQVAYIVSKGWNPAVEHTEPENAFGNYWYMWKLPMFGETDVDTILKEAERCHKRNPHNHVRIVGYDNFKQSQGTSLVVYRGKTV.

Belongs to the RuBisCO small chain family. In terms of assembly, heterohexadecamer of 8 large and 8 small subunits.

RuBisCO catalyzes two reactions: the carboxylation of D-ribulose 1,5-bisphosphate, the primary event in carbon dioxide fixation, as well as the oxidative fragmentation of the pentose substrate. Both reactions occur simultaneously and in competition at the same active site. Although the small subunit is not catalytic it is essential for maximal activity. This is Ribulose bisphosphate carboxylase small subunit 2 from Acidithiobacillus ferrooxidans (Thiobacillus ferrooxidans).